Here is a 159-residue protein sequence, read N- to C-terminus: Mating-type P-specific polypeptide Pi (159 aa).

Residues 103 to 159 constitute a DNA-binding region (homeobox; TALE-type; partial); that stretch reads MTTVRGQCSKCTKPHLMRWLLLHYDNPYPSNSEFYDLSAATGLTRTQLRNWFSNRRR.

Belongs to the TALE/M-ATYP homeobox family.

The protein resides in the nucleus. Mating type proteins are sequence specific DNA-binding proteins that act as master switches in yeast differentiation by controlling gene expression in a cell type-specific fashion. Required for meiosis, but plays no role in conjugation. The chain is Mating-type P-specific polypeptide Pi (matPi) from Schizosaccharomyces kambucha (Fission yeast).